The chain runs to 420 residues: Transcription factor bHLH89 (420 aa).

The tract at residues 196–216 is disordered; it reads EENNNLDDGLNRKGRGSKKRK. A compositionally biased stretch (basic residues) spans 207 to 216; that stretch reads RKGRGSKKRK. Residues 212–261 enclose the bHLH domain; sequence SKKRKIFPTERERRVHFKDRFGDLKNLIPNPTKNDRASIVGEAIDYIKEL.

Homodimer. Flowers.

It localises to the nucleus. This is Transcription factor bHLH89 (BHLH89) from Arabidopsis thaliana (Mouse-ear cress).